We begin with the raw amino-acid sequence, 1732 residues long: Serine/threonine-protein kinase MRCK alpha (1732 aa).

One can recognise a Protein kinase domain in the interval 77 to 343 (FEILKVIGRG…IEDFKKHPFF (267 aa)). ATP is bound by residues 83 to 91 (IGRGAFGEV) and K106. The active-site Proton acceptor is D201. S222 and S234 each carry phosphoserine; by autocatalysis. A Phosphothreonine; by autocatalysis modification is found at T240. The region spanning 344-414 (SGIDWDNIRN…TSSCVLSDRS (71 aa)) is the AGC-kinase C-terminal domain. Coiled coils occupy residues 437-670 (NNLA…KQKQ), 713-820 (SEIK…WEAQ), and 880-943 (LELQ…SEKG). Residues 973–1002 (CTPAGKGRRIADSAPLPVHTPTLRKKGCPA) form a disordered region. The Phorbol-ester/DAG-type zinc-finger motif lies at 1012 to 1062 (THQFFVKSFTAPTKCHQCTSLMVGLIRQGCSCEVCGFSCHITCVNKAPTTC). The 120-residue stretch at 1082 to 1201 (GTAYEGHVRI…WVGVLSELHK (120 aa)) folds into the PH domain. At S1127 the chain carries Phosphoserine. Positions 1227–1499 (IKTTQAAAII…RPLNTEGSLN (273 aa)) constitute a CNH domain. The residue at position 1545 (S1545) is a Phosphoserine. The CRIB domain maps to 1571-1584 (ISNPTNFNHIAHMG). The interval 1592–1732 (LKDLPMNPRP…ESTDRGSWDP (141 aa)) is disordered. Over residues 1604–1619 (SRTVFSGSVSIPSITK) the composition is skewed to polar residues. S1611, S1613, S1629, S1651, S1664, S1669, S1693, S1719, and S1721 each carry phosphoserine. The span at 1625 to 1640 (GRSMSASSGLSARSSA) shows a compositional bias: low complexity. The span at 1665–1674 (PSEGSLSSGG) shows a compositional bias: low complexity.

Belongs to the protein kinase superfamily. AGC Ser/Thr protein kinase family. DMPK subfamily. Homodimer and homotetramer via the coiled coil regions. Interacts tightly with GTP-bound but not GDP-bound CDC42. Forms a tripartite complex with MYO18A and LURAP1 with the latter acting as an adapter connecting CDC42BPA and MYO18A. LURAP1 binding results in activation of CDC42BPA by abolition of its negative autoregulation. Interacts with LURAP1. Interacts (via AGC-kinase C-terminal domain) with FAM89B/LRAP25 (via LRR repeat). Forms a tripartite complex with FAM89B/LRAP25 and LIMK1. Mg(2+) is required as a cofactor. Post-translationally, proteolytically cleaved by caspases upon apoptosis induction. The cleavage at Asp-478 by CASP3 increases its kinase activity (in vitro). In terms of tissue distribution, highly expressed in the brain and lung and present in lower levels in all other tissues tested.

The protein localises to the cytoplasm. It is found in the cell projection. Its subcellular location is the lamellipodium. The enzyme catalyses L-seryl-[protein] + ATP = O-phospho-L-seryl-[protein] + ADP + H(+). It catalyses the reaction L-threonyl-[protein] + ATP = O-phospho-L-threonyl-[protein] + ADP + H(+). With respect to regulation, maintained in an inactive, closed conformation by an interaction between the kinase domain and the negative autoregulatory C-terminal coiled-coil region. Agonist binding to the phorbol ester binding site disrupts this, releasing the kinase domain to allow N-terminus-mediated dimerization and kinase activation by transautophosphorylation. Inhibited by chelerythrine chloride. Its function is as follows. Serine/threonine-protein kinase which is an important downstream effector of CDC42 and plays a role in the regulation of cytoskeleton reorganization and cell migration. Regulates actin cytoskeletal reorganization via phosphorylation of PPP1R12A and MYL9/MLC2. In concert with MYO18A and LURAP1, is involved in modulating lamellar actomyosin retrograde flow that is crucial to cell protrusion and migration. Phosphorylates: PPP1R12C, LIMK1 and LIMK2. May play a role in TFRC-mediated iron uptake. In concert with FAM89B/LRAP25 mediates the targeting of LIMK1 to the lamellipodium resulting in its activation and subsequent phosphorylation of CFL1 which is important for lamellipodial F-actin regulation. Triggers the formation of an extrusion apical actin ring required for epithelial extrusion of apoptotic cells. The protein is Serine/threonine-protein kinase MRCK alpha of Rattus norvegicus (Rat).